Consider the following 114-residue polypeptide: Neurotrophic factor BDNF precursor form (114 aa).

Intrachain disulfides connect Cys14–Cys81, Cys59–Cys110, and Cys69–Cys112.

The protein belongs to the NGF-beta family. Monomers and homodimers. Binds to NTRK2/TRKB. Can form heterodimers with other neurotrophin family members, such as NTF3 and NTF4 (in vitro), but the physiological relevance of this is not clear. BDNF precursor form: interacts with the heterodimer formed by NGFR and SORCS2. Mature BDNF has much lower affinity for the heterodimer formed by NGFR and SORCS2. N-glycosylated and glycosulfated, contrary to mature BDNF. Post-translationally, mature BDNF is produced by proteolytic removal of the propeptide, catalyzed by a FURIN family member. In addition, the precursor form is proteolytically cleaved within the propeptide, but this is not an obligatory intermediate for the production of mature BDNF. Can be converted into mature BDNF by plasmin (PLG).

It is found in the secreted. In terms of biological role, important signaling molecule that activates signaling cascades downstream of NTRK2. During development, promotes the survival and differentiation of selected neuronal populations of the peripheral and central nervous systems. Participates in axonal growth, pathfinding and in the modulation of dendritic growth and morphology. Major regulator of synaptic transmission and plasticity at adult synapses in many regions of the CNS. The versatility of BDNF is emphasized by its contribution to a range of adaptive neuronal responses including long-term potentiation (LTP), long-term depression (LTD), certain forms of short-term synaptic plasticity, as well as homeostatic regulation of intrinsic neuronal excitability. Its function is as follows. Important signaling molecule that activates signaling cascades downstream of NTRK2. Activates signaling cascades via the heterodimeric receptor formed by NGFR and SORCS2. Signaling via NGFR and SORCS2 plays a role in synaptic plasticity and long-term depression (LTD). Binding to NGFR and SORCS2 promotes neuronal apoptosis. Promotes neuronal growth cone collapse. This is Neurotrophic factor BDNF precursor form (BDNF) from Macaca mulatta (Rhesus macaque).